The sequence spans 456 residues: Chitin synthase regulatory factor 1 (456 aa).

3 disordered regions span residues 1–20 (MPAS…ALLV), 38–74 (ESPL…SLSS), and 139–158 (SKPS…SGSE). The segment covering 140 to 158 (KPSLSSNSSDSSFSKSGSE) has biased composition (low complexity). Phosphoserine occurs at positions 227 and 230. 4 Sel1-like repeats span residues 293-327 (NFVP…SLGH), 328-364 (DRSS…DKGN), 365-402 (ADAM…MLGH), and 403-438 (APAC…INDS).

In terms of biological role, involved in chitin biosynthesis. In Schizosaccharomyces pombe (strain 972 / ATCC 24843) (Fission yeast), this protein is Chitin synthase regulatory factor 1 (chr1).